The sequence spans 142 residues: Hemoglobin subunit alpha-1/2 (142 aa).

The Globin domain maps to 2–142 (VLSADDKTNI…VSTVLTSKYR (141 aa)). Position 4 is a phosphoserine (S4). An N6-succinyllysine modification is found at K8. T9 carries the post-translational modification Phosphothreonine. K12 is modified (N6-succinyllysine). K17 carries the N6-acetyllysine; alternate modification. K17 is subject to N6-succinyllysine; alternate. Position 25 is a phosphotyrosine (Y25). K41 bears the N6-succinyllysine mark. S50 bears the Phosphoserine mark. Residue H59 participates in O2 binding. H88 contacts heme b. Residue S103 is modified to Phosphoserine. Phosphothreonine is present on T109. 2 positions are modified to phosphoserine: S125 and S132. T135 and T138 each carry phosphothreonine. The residue at position 139 (S139) is a Phosphoserine.

The protein belongs to the globin family. In terms of assembly, heterotetramer of two alpha chains and two beta chains. Red blood cells.

Involved in oxygen transport from the lung to the various peripheral tissues. Its function is as follows. Hemopressin acts as an antagonist peptide of the cannabinoid receptor CNR1. Hemopressin-binding efficiently blocks cannabinoid receptor CNR1 and subsequent signaling. This is Hemoglobin subunit alpha-1/2 (Hba1) from Rattus norvegicus (Rat).